Reading from the N-terminus, the 420-residue chain is Protein translocase subunit SecF (420 aa).

The next 6 membrane-spanning stretches (helical) occupy residues 7–27, 250–270, 276–296, 309–327, 358–378, and 388–408; these read FSLL…AGVL, LLVR…FLYV, WFFA…MVSF, IAAI…VVVF, VVTT…TEGG, and VGMV…IALI.

This sequence belongs to the SecD/SecF family. SecF subfamily. Forms a complex with SecD. Part of the essential Sec protein translocation apparatus which comprises SecA, SecYEG and auxiliary proteins SecDF. Other proteins may also be involved.

The protein localises to the cell inner membrane. In terms of biological role, part of the Sec protein translocase complex. Interacts with the SecYEG preprotein conducting channel. SecDF uses the proton motive force (PMF) to complete protein translocation after the ATP-dependent function of SecA. This chain is Protein translocase subunit SecF, found in Treponema pallidum (strain Nichols).